Consider the following 277-residue polypeptide: Thymidylate synthase (277 aa).

A dUMP-binding site is contributed by R21. H51 is a binding site for (6R)-5,10-methylene-5,6,7,8-tetrahydrofolate. 139–140 contributes to the dUMP binding site; it reads RR. The Nucleophile role is filled by C159. DUMP-binding positions include 179–182, N190, and 220–222; these read RSAD and HIY. (6R)-5,10-methylene-5,6,7,8-tetrahydrofolate is bound at residue D182. A276 serves as a coordination point for (6R)-5,10-methylene-5,6,7,8-tetrahydrofolate.

The protein belongs to the thymidylate synthase family. Bacterial-type ThyA subfamily. As to quaternary structure, homodimer.

Its subcellular location is the cytoplasm. It catalyses the reaction dUMP + (6R)-5,10-methylene-5,6,7,8-tetrahydrofolate = 7,8-dihydrofolate + dTMP. The protein operates within pyrimidine metabolism; dTTP biosynthesis. Catalyzes the reductive methylation of 2'-deoxyuridine-5'-monophosphate (dUMP) to 2'-deoxythymidine-5'-monophosphate (dTMP) while utilizing 5,10-methylenetetrahydrofolate (mTHF) as the methyl donor and reductant in the reaction, yielding dihydrofolate (DHF) as a by-product. This enzymatic reaction provides an intracellular de novo source of dTMP, an essential precursor for DNA biosynthesis. The polypeptide is Thymidylate synthase (Ruegeria sp. (strain TM1040) (Silicibacter sp.)).